A 455-amino-acid chain; its full sequence is Hydroxymethylglutaryl-CoA synthase 2 (455 aa).

Catalysis depends on Glu86, which acts as the Proton donor/acceptor. Cys120 acts as the Acyl-thioester intermediate in catalysis. Residues Cys120, Thr161, Ser211, His255, Lys264, Asn329, and Ser363 each contribute to the (3S)-3-hydroxy-3-methylglutaryl-CoA site. The active-site Proton donor/acceptor is the His255.

It belongs to the thiolase-like superfamily. HMG-CoA synthase family.

The enzyme catalyses acetoacetyl-CoA + acetyl-CoA + H2O = (3S)-3-hydroxy-3-methylglutaryl-CoA + CoA + H(+). It functions in the pathway metabolic intermediate biosynthesis; (R)-mevalonate biosynthesis; (R)-mevalonate from acetyl-CoA: step 2/3. This enzyme condenses acetyl-CoA with acetoacetyl-CoA to form HMG-CoA, which is the substrate for HMG-CoA reductase. The chain is Hydroxymethylglutaryl-CoA synthase 2 (HMGCS-2) from Blattella germanica (German cockroach).